The primary structure comprises 225 residues: UPF0758 protein BCE_4545 (225 aa).

The MPN domain maps to 103–225 (SIRSPEDCAT…FVSLKEKGHI (123 aa)). Residues His-174, His-176, and Asp-187 each contribute to the Zn(2+) site. The JAMM motif motif lies at 174–187 (HNHPSGDPAPSRED).

This sequence belongs to the UPF0758 family.

This Bacillus cereus (strain ATCC 10987 / NRS 248) protein is UPF0758 protein BCE_4545.